The chain runs to 784 residues: Kinesin-like protein Klp68D (784 aa).

The 326-residue stretch at 19–344 (CVQVVVRCRP…LRYASRAKSI (326 aa)) folds into the Kinesin motor domain. 106–113 (GQTGTGKT) is an ATP binding site. Residues 351 to 385 (NEDPQDAKLKEYQEEIERLKRLIGPQQQQRSEKQV) are a coiled coil. Disordered stretches follow at residues 371-449 (RLIG…ERER), 605-652 (KFSS…PSSL), and 742-784 (IKSS…LVNK). The span at 386–396 (TAKKQRVKKPK) shows a compositional bias: basic residues. Over residues 416–428 (PVEDDSDPEGAES) the composition is skewed to acidic residues. Residues 426–582 (AESESDKENE…KRQLLIIDNF (157 aa)) are a coiled coil. Basic and acidic residues predominate over residues 429-449 (ESDKENEAEVAKSNEELERER). Residues 622–634 (SSKRPVSHPQRRR) show a composition bias toward basic residues. Low complexity predominate over residues 769-778 (KKPASAYPKA).

It belongs to the TRAFAC class myosin-kinesin ATPase superfamily. Kinesin family. Kinesin II subfamily. As to expression, expressed primarily in the central nervous system and in a subset of the peripheral nervous system during embryogenesis.

The protein resides in the cytoplasm. It localises to the cytoskeleton. Its function is as follows. Plus-end directed microtubule motor that may be used for anterograde axonal transport and could conceivably move cargos in fly neurons different than those moved by kinesin heavy chain or other plus-end directed motors. The chain is Kinesin-like protein Klp68D (Klp68D) from Drosophila melanogaster (Fruit fly).